A 293-amino-acid chain; its full sequence is Deubiquitinase OTUD6B (293 aa).

2 disordered regions span residues 1–43 (MEEV…RRKQ) and 57–114 (QKHE…LEKE). The 138-residue stretch at 147-284 (LQIKEISSDG…GEHYNSVEPL (138 aa)) folds into the OTU domain. Positions 152–158 (ISSDGHC) are cys-loop. The active site involves aspartate 155. Cysteine 158 acts as the Nucleophile in catalysis. Positions 219-229 (VADTAAWGGQL) are variable-loop. The interval 267–277 (YMRHAYGLGEH) is his-loop. Residue histidine 277 is part of the active site.

It catalyses the reaction Thiol-dependent hydrolysis of ester, thioester, amide, peptide and isopeptide bonds formed by the C-terminal Gly of ubiquitin (a 76-residue protein attached to proteins as an intracellular targeting signal).. Deubiquitinating enzyme that may play a role in the ubiquitin-dependent regulation of different cellular processes. This chain is Deubiquitinase OTUD6B (otud6b), found in Danio rerio (Zebrafish).